A 406-amino-acid chain; its full sequence is [Pyruvate dehydrogenase (acetyl-transferring)] kinase isozyme 3, mitochondrial (406 aa).

The Histidine kinase domain occupies 131–362 (IEYKEKFGFD…DAVIYLKALS (232 aa)). An ATP-binding site is contributed by 247 to 254 (ELFKNSMR). The residue at position 278 (K278) is an N6-succinyllysine. ATP contacts are provided by residues D287, 306-307 (ST), and 323-328 (GFGYGL). Residues 383 to 406 (TPEADDWSNPSSEPRDASKYKAKQ) are disordered. A compositionally biased stretch (basic and acidic residues) spans 395–406 (EPRDASKYKAKQ).

Belongs to the PDK/BCKDK protein kinase family. In terms of assembly, homodimer. Interacts with the pyruvate dehydrogenase complex subunit DLAT, and is part of the multimeric pyruvate dehydrogenase complex that contains multiple copies of pyruvate dehydrogenase (E1), dihydrolipoamide acetyltransferase (DLAT, E2) and lipoamide dehydrogenase (DLD, E3). As to expression, expressed in heart, skeletal muscle, spinal cord, as well as fetal and adult brain.

Its subcellular location is the mitochondrion matrix. It catalyses the reaction L-seryl-[pyruvate dehydrogenase E1 alpha subunit] + ATP = O-phospho-L-seryl-[pyruvate dehydrogenase E1 alpha subunit] + ADP + H(+). Its activity is regulated as follows. Activated by interaction with DLAT. Inhibited by AZD7545, dichloroacetate and radicicol. In terms of biological role, inhibits pyruvate dehydrogenase activity by phosphorylation of the E1 subunit PDHA1, and thereby regulates glucose metabolism and aerobic respiration. Can also phosphorylate PDHA2. Decreases glucose utilization and increases fat metabolism in response to prolonged fasting, and as adaptation to a high-fat diet. Plays a role in glucose homeostasis and in maintaining normal blood glucose levels in function of nutrient levels and under starvation. Plays a role in the generation of reactive oxygen species. The sequence is that of [Pyruvate dehydrogenase (acetyl-transferring)] kinase isozyme 3, mitochondrial (PDK3) from Homo sapiens (Human).